Here is a 357-residue protein sequence, read N- to C-terminus: Phosphoribosylformylglycinamidine cyclo-ligase (357 aa).

The protein belongs to the AIR synthase family.

Its subcellular location is the cytoplasm. It catalyses the reaction 2-formamido-N(1)-(5-O-phospho-beta-D-ribosyl)acetamidine + ATP = 5-amino-1-(5-phospho-beta-D-ribosyl)imidazole + ADP + phosphate + H(+). It functions in the pathway purine metabolism; IMP biosynthesis via de novo pathway; 5-amino-1-(5-phospho-D-ribosyl)imidazole from N(2)-formyl-N(1)-(5-phospho-D-ribosyl)glycinamide: step 2/2. The sequence is that of Phosphoribosylformylglycinamidine cyclo-ligase from Rhodopseudomonas palustris (strain BisB18).